Consider the following 374-residue polypeptide: Ribosomal RNA large subunit methyltransferase G (374 aa).

The protein belongs to the methyltransferase superfamily. RlmG family.

Its subcellular location is the cytoplasm. The enzyme catalyses guanosine(1835) in 23S rRNA + S-adenosyl-L-methionine = N(2)-methylguanosine(1835) in 23S rRNA + S-adenosyl-L-homocysteine + H(+). Functionally, specifically methylates the guanine in position 1835 (m2G1835) of 23S rRNA. This Photobacterium profundum (strain SS9) protein is Ribosomal RNA large subunit methyltransferase G.